The sequence spans 459 residues: Zeatin O-glucosyltransferase (459 aa).

Catalysis depends on His-26, which acts as the Proton acceptor. His-26 serves as a coordination point for an anthocyanidin. The Charge relay role is filled by Asp-125. Residues Ser-148, Ala-335, Gln-337, His-352, Trp-355, Asn-356, Ser-357, Glu-360, Asp-376, and Gln-377 each coordinate UDP-alpha-D-glucose.

It belongs to the UDP-glycosyltransferase family.

The enzyme catalyses trans-zeatin + UDP-alpha-D-glucose = O-beta-D-glucosyl-trans-zeatin + UDP + H(+). May regulate active versus storage forms of cytokinins, and could have an impact on seed growth. Can also use UDP-xylose to catalyze the formation of O-xylosylzeatin but at much lower affinity. In Phaseolus lunatus (Lima bean), this protein is Zeatin O-glucosyltransferase.